We begin with the raw amino-acid sequence, 90 residues long: Small ribosomal subunit protein bS20 (90 aa).

It belongs to the bacterial ribosomal protein bS20 family.

Its function is as follows. Binds directly to 16S ribosomal RNA. This is Small ribosomal subunit protein bS20 from Francisella philomiragia subsp. philomiragia (strain ATCC 25017 / CCUG 19701 / FSC 153 / O#319-036).